The primary structure comprises 448 residues: Glucose-6-phosphate isomerase (448 aa).

Glu-290 serves as the catalytic Proton donor. Catalysis depends on residues His-311 and Lys-425.

This sequence belongs to the GPI family.

It is found in the cytoplasm. It carries out the reaction alpha-D-glucose 6-phosphate = beta-D-fructose 6-phosphate. It functions in the pathway carbohydrate biosynthesis; gluconeogenesis. Its pathway is carbohydrate degradation; glycolysis; D-glyceraldehyde 3-phosphate and glycerone phosphate from D-glucose: step 2/4. In terms of biological role, catalyzes the reversible isomerization of glucose-6-phosphate to fructose-6-phosphate. This Acetivibrio thermocellus (strain ATCC 27405 / DSM 1237 / JCM 9322 / NBRC 103400 / NCIMB 10682 / NRRL B-4536 / VPI 7372) (Clostridium thermocellum) protein is Glucose-6-phosphate isomerase.